Here is a 264-residue protein sequence, read N- to C-terminus: Taurine import ATP-binding protein TauB (264 aa).

Residues 4–233 form the ABC transporter domain; it reads LQLERISAQY…RYAAGESARA (230 aa). 38–45 serves as a coordination point for ATP; sequence GPSGSGKT.

The protein belongs to the ABC transporter superfamily. Taurine importer (TC 3.A.1.17.1) family. As to quaternary structure, the complex is composed of two ATP-binding proteins (TauB), two transmembrane proteins (TauC) and a solute-binding protein (TauA).

It is found in the cell inner membrane. It catalyses the reaction taurine(out) + ATP + H2O = taurine(in) + ADP + phosphate + H(+). Part of the ABC transporter complex TauABC involved in taurine import. Responsible for energy coupling to the transport system. This chain is Taurine import ATP-binding protein TauB, found in Pseudomonas fluorescens (strain Pf0-1).